The primary structure comprises 87 residues: Small ribosomal subunit protein bS20 (87 aa).

Residues 1–22 are disordered; that stretch reads MANSAQARKRARQAVKQRAHNA. Over residues 7-19 the composition is skewed to basic residues; that stretch reads ARKRARQAVKQRA.

This sequence belongs to the bacterial ribosomal protein bS20 family.

Functionally, binds directly to 16S ribosomal RNA. This chain is Small ribosomal subunit protein bS20, found in Methylobacillus flagellatus (strain ATCC 51484 / DSM 6875 / VKM B-1610 / KT).